Here is a 139-residue protein sequence, read N- to C-terminus: Maximins 4/H3 type 4 (139 aa).

A signal peptide spans 1 to 18 (MNFKYIIAVSFLIASAYA). A propeptide spanning residues 19–43 (RSVQNDEQSLSQRDVLEEESLREIR) is cleaved from the precursor. N70 carries the asparagine amide modification. The propeptide occupies 74 to 118 (TAEEHEVMKRLEAVMRDLDSLDHPEEASERETRGFNQDEIAKEKR). Residue I138 is modified to Isoleucine amide.

Belongs to the bombinin family. Expressed by the skin glands.

It localises to the secreted. Maximin-4 shows antibacterial activity against both Gram-positive and Gram-negative bacteria. It also shows antimicrobial activity against the fungus C.albicans, but not against A.flavus nor P.uticale. It has little hemolytic activity. It does not possess a significant cytotoxicity against tumor cell lines. It does not possess a significant anti-HIV activity. Its function is as follows. Maximin-H3 shows antibacterial activity against both Gram-positive and Gram-negative bacteria. It also shows antimicrobial activity against the fungus C.albicans. Shows strong hemolytic activity. This chain is Maximins 4/H3 type 4, found in Bombina maxima (Giant fire-bellied toad).